A 320-amino-acid chain; its full sequence is tRNA uridine(34) hydroxylase (320 aa).

A Rhodanese domain is found at 125–221; the sequence is KEKRPLLLDV…YGLKQGSEHW (97 aa). Cys181 acts as the Cysteine persulfide intermediate in catalysis.

Belongs to the TrhO family.

It carries out the reaction uridine(34) in tRNA + AH2 + O2 = 5-hydroxyuridine(34) in tRNA + A + H2O. Its function is as follows. Catalyzes oxygen-dependent 5-hydroxyuridine (ho5U) modification at position 34 in tRNAs. The chain is tRNA uridine(34) hydroxylase from Protochlamydia amoebophila (strain UWE25).